Here is a 564-residue protein sequence, read N- to C-terminus: Proline--tRNA ligase (564 aa).

Belongs to the class-II aminoacyl-tRNA synthetase family. ProS type 1 subfamily. As to quaternary structure, homodimer.

It is found in the cytoplasm. It catalyses the reaction tRNA(Pro) + L-proline + ATP = L-prolyl-tRNA(Pro) + AMP + diphosphate. Functionally, catalyzes the attachment of proline to tRNA(Pro) in a two-step reaction: proline is first activated by ATP to form Pro-AMP and then transferred to the acceptor end of tRNA(Pro). As ProRS can inadvertently accommodate and process non-cognate amino acids such as alanine and cysteine, to avoid such errors it has two additional distinct editing activities against alanine. One activity is designated as 'pretransfer' editing and involves the tRNA(Pro)-independent hydrolysis of activated Ala-AMP. The other activity is designated 'posttransfer' editing and involves deacylation of mischarged Ala-tRNA(Pro). The misacylated Cys-tRNA(Pro) is not edited by ProRS. The protein is Proline--tRNA ligase of Bacillus subtilis (strain 168).